Reading from the N-terminus, the 488-residue chain is 1-deoxy-D-xylulose 5-phosphate reductoisomerase, apicoplastic (488 aa).

An apicoplast-targeting transit peptide spans 1-72; the sequence is MKKYIYIYFF…LCKKDLIDIG (72 aa). Residues 86–89 and 115–117 each bind NADP(+); these read TGSI and NKS. Position 205 (K205) interacts with 1-deoxy-D-xylulose 5-phosphate. E206 is an NADP(+) binding site. D231 contacts Mn(2+). 1-deoxy-D-xylulose 5-phosphate is bound by residues S232, E233, S270, and H293. E233 contributes to the Mn(2+) binding site. G299 is an NADP(+) binding site. 1-deoxy-D-xylulose 5-phosphate-binding residues include S306, N311, K312, and E315. E315 contacts Mn(2+).

Belongs to the DXR family. As to quaternary structure, homodimer. The cofactor is Mg(2+). Mn(2+) serves as cofactor.

Its subcellular location is the plastid. The protein localises to the apicoplast. The enzyme catalyses 2-C-methyl-D-erythritol 4-phosphate + NADP(+) = 1-deoxy-D-xylulose 5-phosphate + NADPH + H(+). It participates in isoprenoid biosynthesis; isopentenyl diphosphate biosynthesis via DXP pathway; isopentenyl diphosphate from 1-deoxy-D-xylulose 5-phosphate: step 1/6. Inhibited by fosmidomycin and its derivatives. In terms of biological role, catalyzes the NADPH-dependent rearrangement and reduction of 1-deoxy-D-xylulose-5-phosphate (DXP) to 2-C-methyl-D-erythritol 4-phosphate (MEP). The polypeptide is 1-deoxy-D-xylulose 5-phosphate reductoisomerase, apicoplastic (DXR) (Plasmodium falciparum (isolate 3D7)).